Here is a 78-residue protein sequence, read N- to C-terminus: Large ribosomal subunit protein bL28 (78 aa).

Residues M1–T25 are disordered.

It belongs to the bacterial ribosomal protein bL28 family.

The protein is Large ribosomal subunit protein bL28 of Aliivibrio salmonicida (strain LFI1238) (Vibrio salmonicida (strain LFI1238)).